We begin with the raw amino-acid sequence, 584 residues long: Aspartate--tRNA(Asp/Asn) ligase (584 aa).

Glu-173 provides a ligand contact to L-aspartate. Residues 197 to 200 form an aspartate region; the sequence is QLFK. Arg-219 is an L-aspartate binding site. ATP-binding positions include 219-221 and Gln-228; that span reads RDE. His-447 provides a ligand contact to L-aspartate. Residue Glu-477 participates in ATP binding. Arg-484 is a binding site for L-aspartate. Residue 529–532 coordinates ATP; sequence GFDR.

It belongs to the class-II aminoacyl-tRNA synthetase family. Type 1 subfamily. Homodimer.

Its subcellular location is the cytoplasm. The catalysed reaction is tRNA(Asx) + L-aspartate + ATP = L-aspartyl-tRNA(Asx) + AMP + diphosphate. Aspartyl-tRNA synthetase with relaxed tRNA specificity since it is able to aspartylate not only its cognate tRNA(Asp) but also tRNA(Asn). Reaction proceeds in two steps: L-aspartate is first activated by ATP to form Asp-AMP and then transferred to the acceptor end of tRNA(Asp/Asn). The polypeptide is Aspartate--tRNA(Asp/Asn) ligase (Campylobacter hominis (strain ATCC BAA-381 / DSM 21671 / CCUG 45161 / LMG 19568 / NCTC 13146 / CH001A)).